The sequence spans 135 residues: uncharacterized protein (135 aa).

Transmembrane regions (helical) follow at residues 13-35 (AKVI…AMYL), 82-101 (VAVF…LLSI), and 108-130 (IYRI…PLIL).

The protein localises to the cell membrane. This is an uncharacterized protein from Archaeoglobus fulgidus (strain ATCC 49558 / DSM 4304 / JCM 9628 / NBRC 100126 / VC-16).